An 87-amino-acid chain; its full sequence is Putative defensin-like protein 238 (87 aa).

The first 23 residues, 1–23 (MRSITWFIVFCVFMFIALNHVKG), serve as a signal peptide directing secretion. Disulfide bonds link Cys-30–Cys-87, Cys-40–Cys-65, Cys-48–Cys-78, and Cys-63–Cys-80.

It belongs to the DEFL family.

It is found in the secreted. In Arabidopsis thaliana (Mouse-ear cress), this protein is Putative defensin-like protein 238 (SCRL16).